A 152-amino-acid polypeptide reads, in one-letter code: Xanthine-guanine phosphoribosyltransferase (152 aa).

5-phospho-alpha-D-ribose 1-diphosphate-binding positions include 37 to 38 (RG), R69, and 88 to 96 (DDLVDTGGT). GMP is bound at residue R69. D89 contributes to the Mg(2+) binding site. Residues D92 and I135 each coordinate guanine. Positions 92 and 135 each coordinate xanthine. GMP contacts are provided by residues 92–96 (DTGGT) and 134–135 (WI).

The protein belongs to the purine/pyrimidine phosphoribosyltransferase family. XGPT subfamily. As to quaternary structure, homotetramer. Mg(2+) is required as a cofactor.

Its subcellular location is the cell inner membrane. It catalyses the reaction GMP + diphosphate = guanine + 5-phospho-alpha-D-ribose 1-diphosphate. It carries out the reaction XMP + diphosphate = xanthine + 5-phospho-alpha-D-ribose 1-diphosphate. The catalysed reaction is IMP + diphosphate = hypoxanthine + 5-phospho-alpha-D-ribose 1-diphosphate. It participates in purine metabolism; GMP biosynthesis via salvage pathway; GMP from guanine: step 1/1. Its pathway is purine metabolism; XMP biosynthesis via salvage pathway; XMP from xanthine: step 1/1. In terms of biological role, purine salvage pathway enzyme that catalyzes the transfer of the ribosyl-5-phosphate group from 5-phospho-alpha-D-ribose 1-diphosphate (PRPP) to the N9 position of the 6-oxopurines guanine and xanthine to form the corresponding ribonucleotides GMP (guanosine 5'-monophosphate) and XMP (xanthosine 5'-monophosphate), with the release of PPi. To a lesser extent, also acts on hypoxanthine. The chain is Xanthine-guanine phosphoribosyltransferase from Shigella boydii serotype 18 (strain CDC 3083-94 / BS512).